The sequence spans 459 residues: Flavin-containing monooxygenase FMO GS-OX5 (459 aa).

17-22 is an FAD binding site; the sequence is GAGAAG. NADP(+) is bound at residue 212–217; the sequence is GNFASG.

It belongs to the FMO family.

The enzyme catalyses a (Z)-omega-(methylsulfanyl)-N-sulfo-alkylhydroximate S-glucoside + NADPH + O2 + H(+) = a (Z)-omega-(methylsulfinyl)-alkyl-glucosinolate + NADP(+) + H2O. Functionally, catalyzes the conversion of methylthioalkyl glucosinolates into methylsulfinylalkyl glucosinolates. Specific for 8-methylthiooctyl (8-MTO) glucosinolates. In Arabidopsis thaliana (Mouse-ear cress), this protein is Flavin-containing monooxygenase FMO GS-OX5 (FMOGS-OX5).